A 484-amino-acid chain; its full sequence is MTVRVRIAPSPTGNLHIGTARTAVFNWLFAHHHQGQFILRVEDTDRERSRAEYTENIKSGLAWLGLTWDEGPFFQTQRLDLYRQGIQTLLDKGFAYRCYCTPEELEQMREAQKAQNQAPRYDNRHRHLTEEQRQGLEAQGRKPVIRFIIDDDREIVWHDLIRGKMTWKGSDLGGDMVIARIADNPDQPFGQPLYNLAVVVDDMDMKITHVIRGEDHIANTAKQILLYEALGATVPEFAHTPLILNQEGRKLSKRDGVTSIDDFRKMGFLPQALANYMTLLGWTPPDSTQEIFTLTEAAQQFSLERVNKAGAKFDWDKLDWINSQYVHKMSGEELVDLLVPYWQEAGYPINIDSDRPWLEKMATLIGPSLTRLSDAAKESVLLFGGRVDYSEEAIAQMKQDGVKDVLQAVVEKIQESSQLTEDEAKDTIKQVTKTFKVKKGLVMRSLRAGLMGELHGPDLIQSWLLLHEKGWDKTRLTHGLSLVE.

A 'HIGH' region motif is present at residues 9–19; sequence PSPTGNLHIGT. Positions 98, 100, 125, and 127 each coordinate Zn(2+). The short motif at 250–254 is the 'KMSKS' region element; sequence KLSKR. Lys-253 is an ATP binding site.

This sequence belongs to the class-I aminoacyl-tRNA synthetase family. Glutamate--tRNA ligase type 1 subfamily. As to quaternary structure, monomer. The cofactor is Zn(2+).

Its subcellular location is the cytoplasm. The enzyme catalyses tRNA(Glu) + L-glutamate + ATP = L-glutamyl-tRNA(Glu) + AMP + diphosphate. In terms of biological role, catalyzes the attachment of glutamate to tRNA(Glu) in a two-step reaction: glutamate is first activated by ATP to form Glu-AMP and then transferred to the acceptor end of tRNA(Glu). This chain is Glutamate--tRNA ligase, found in Crocosphaera subtropica (strain ATCC 51142 / BH68) (Cyanothece sp. (strain ATCC 51142)).